Here is a 132-residue protein sequence, read N- to C-terminus: Chemokine-like protein TAFA-5 (132 aa).

The signal sequence occupies residues Met1–Gly43. N-linked (GlcNAc...) asparagine glycosylation is present at Asn113.

The protein belongs to the TAFA family. Expressed in the subcutaneous and perirenal adipose tissue (at protein level). Highly expressed in adipose tissue with moderate expression in the brain and ovary. Isoform 2: Brain-specific.

The protein resides in the secreted. Acts as a chemokine-like protein by regulating cell proliferation and migration through activation of G protein-coupled receptors (GPCRs), such as S1PR2 and FPR2. Stimulates chemotactic migration of macrophages mediated by the MAPK3/ERK1 and AKT1 pathway. Blocks TNFSF11/RANKL-induced osteoclast formation from macrophages by inhibiting up-regulation of osteoclast fusogenic and differentiation genes. Stimulation of macrophage migration and inhibition of osteoclast formation is mediated via GPCR FPR2. Acts as an adipokine by negatively regulating vascular smooth muscle cell (VSMC) proliferation and migration in response to platelet-derived growth factor stimulation via GPCR S1PR2 and G protein GNA12/GNA13-transmitted RHOA signaling. Inhibits injury-induced cell proliferation and neointima formation in the femoral arteries. In Homo sapiens (Human), this protein is Chemokine-like protein TAFA-5.